The sequence spans 175 residues: Bifunctional protein PyrR (175 aa).

Substrate-binding positions include 40 to 41 (TR), arginine 85, 102 to 110 (DDVLYTGRT), arginine 135, and valine 159. The PRPP-binding signature appears at 98 to 110 (VVIIDDVLYTGRT).

The protein belongs to the purine/pyrimidine phosphoribosyltransferase family. PyrR subfamily. As to quaternary structure, homodimer and homohexamer; in equilibrium.

It catalyses the reaction UMP + diphosphate = 5-phospho-alpha-D-ribose 1-diphosphate + uracil. In terms of biological role, regulates transcriptional attenuation of the pyrimidine nucleotide (pyr) operon by binding in a uridine-dependent manner to specific sites on pyr mRNA. This disrupts an antiterminator hairpin in the RNA and favors formation of a downstream transcription terminator, leading to a reduced expression of downstream genes. Also displays a weak uracil phosphoribosyltransferase activity which is not physiologically significant. This Staphylococcus epidermidis (strain ATCC 35984 / DSM 28319 / BCRC 17069 / CCUG 31568 / BM 3577 / RP62A) protein is Bifunctional protein PyrR.